Here is a 177-residue protein sequence, read N- to C-terminus: Protein GrpE (177 aa).

It belongs to the GrpE family. In terms of assembly, homodimer. K(+) is required as a cofactor.

The protein localises to the cytoplasm. Participates actively in the response to hyperosmotic and heat shock by preventing the aggregation of stress-denatured proteins, in association with DnaK and GrpE. It is the nucleotide exchange factor for DnaK and may function as a thermosensor. Unfolded proteins bind initially to DnaJ; upon interaction with the DnaJ-bound protein, DnaK hydrolyzes its bound ATP, resulting in the formation of a stable complex. GrpE releases ADP from DnaK; ATP binding to DnaK triggers the release of the substrate protein, thus completing the reaction cycle. Several rounds of ATP-dependent interactions between DnaJ, DnaK and GrpE are required for fully efficient folding. The sequence is that of Protein GrpE from Thermus thermophilus (strain ATCC 27634 / DSM 579 / HB8).